The sequence spans 68 residues: Large ribosomal subunit protein bL35 (68 aa).

Belongs to the bacterial ribosomal protein bL35 family.

The protein is Large ribosomal subunit protein bL35 of Wolbachia pipientis wMel.